Reading from the N-terminus, the 867-residue chain is Alanine--tRNA ligase (867 aa).

H555, H559, C657, and H661 together coordinate Zn(2+).

It belongs to the class-II aminoacyl-tRNA synthetase family. The cofactor is Zn(2+).

Its subcellular location is the cytoplasm. It catalyses the reaction tRNA(Ala) + L-alanine + ATP = L-alanyl-tRNA(Ala) + AMP + diphosphate. Functionally, catalyzes the attachment of alanine to tRNA(Ala) in a two-step reaction: alanine is first activated by ATP to form Ala-AMP and then transferred to the acceptor end of tRNA(Ala). Also edits incorrectly charged Ser-tRNA(Ala) and Gly-tRNA(Ala) via its editing domain. This Psychromonas ingrahamii (strain DSM 17664 / CCUG 51855 / 37) protein is Alanine--tRNA ligase.